The following is a 346-amino-acid chain: Parapinopsin (346 aa).

Residues 1-29 lie on the Extracellular side of the membrane; sequence MASIILINFSETDTLHLGSVNDHIMPRIG. The N-linked (GlcNAc...) asparagine glycan is linked to Asn8. Residues 30 to 54 form a helical membrane-spanning segment; that stretch reads YTILSIIMALSSTFGIILNMVVIIV. Over 55–66 the chain is Cytoplasmic; the sequence is TVRYKQLRQPLN. Residues 67–91 traverse the membrane as a helical segment; sequence YALVNLAVADLGCPVFGGLLTAVTN. The Extracellular segment spans residues 92-106; it reads AMGYFSLGRVGCVLE. Cys103 and Cys180 are disulfide-bonded. A helical membrane pass occupies residues 107–126; it reads GFAVAFFGIAGLCSVAVIAV. The Cytoplasmic segment spans residues 127–145; it reads DRYMVVCRPLGAVMFQTKH. The chain crosses the membrane as a helical span at residues 146–169; it reads ALAGVVFSWVWSFIWNTPPLFGWG. Residues 170–193 are Extracellular-facing; the sequence is SYQLEGVMTSCAPNWYRRDPVNVS. N-linked (GlcNAc...) asparagine glycosylation is present at Asn191. Residues 194 to 221 form a helical membrane-spanning segment; the sequence is YILCYFMLCFALPFATIIFSYMHLLHTL. Residues 222–244 are Cytoplasmic-facing; the sequence is WQVAKLQVADSGSTAKVEVQVAR. The helical transmembrane segment at 245–268 threads the bilayer; it reads MVVIMVMAFLLTWLPYAAFALTVI. The Extracellular portion of the chain corresponds to 269–276; it reads IDSNIYIN. The chain crosses the membrane as a helical span at residues 277-301; the sequence is PVIGTIPAYLAKSSTVFNPIIYIFM. An N6-(retinylidene)lysine modification is found at Lys288. Residues 302 to 346 lie on the Cytoplasmic side of the membrane; sequence NRQFRDYALPCLLCGKNPWAAKEGRDSDTNTLTTTVSKNTSVSPL. Cys315 carries the S-palmitoyl cysteine lipid modification. A disordered region spans residues 325–346; sequence GRDSDTNTLTTTVSKNTSVSPL. Residues 330–346 are compositionally biased toward low complexity; the sequence is TNTLTTTVSKNTSVSPL.

Belongs to the G-protein coupled receptor 1 family. Opsin subfamily. Phosphorylated on some or all of the serine and threonine residues present in the C-terminal region. As to expression, parapineal organ.

Its subcellular location is the membrane. In Ictalurus punctatus (Channel catfish), this protein is Parapinopsin.